Consider the following 728-residue polypeptide: Sodium-dependent transporter snf-5 (728 aa).

At 1–84 (MADSGSNEEA…PEEEEEKRDG (84 aa)) the chain is on the cytoplasmic side. The disordered stretch occupies residues 1–84 (MADSGSNEEA…PEEEEEKRDG (84 aa)). Composition is skewed to low complexity over residues 29-50 (QQVS…STQS) and 60-73 (KNTT…TLDT). A helical membrane pass occupies residues 85–105 (FGNSFEFVLTSLGLAVGLGNI). Positions 97, 99, 100, and 104 each coordinate Na(+). The Extracellular segment spans residues 106 to 119 (WRFPTRAYNNGGSA). A helical membrane pass occupies residues 120 to 140 (FLIPYLTCAFLFGLPAVYFEF). Residues 141-162 (LTGQYQGKSPPVIFRRVRPILE) are Cytoplasmic-facing. A helical membrane pass occupies residues 163–183 (GVGWMGVFVAALVAIYYIVIV). Residues 184 to 285 (SWISIYMINI…PSSGMLDFGG (102 aa)) lie on the Extracellular side of the membrane. A disulfide bond links Cys-204 and Cys-214. 5 N-linked (GlcNAc...) asparagine glycosylation sites follow: Asn-210, Asn-225, Asn-232, Asn-237, and Asn-257. Residues 286–306 (FNWPVFAAMSVCWLLTGLGIL) form a helical membrane-spanning segment. The Cytoplasmic segment spans residues 307–314 (KGAKIMGK). A helical membrane pass occupies residues 315 to 335 (ISYVSVLVPYVLVVVLFINGV). The Extracellular segment spans residues 336-364 (FQDGSGVGLEMYFGTPNYTKLYEQDTWTE). Asn-352 is a glycosylation site (N-linked (GlcNAc...) asparagine). A helical transmembrane segment spans residues 365–386 (ALKQLCFSLSVGHGGLISLSSY). A Na(+)-binding site is contributed by Ser-372. Residues 387–396 (SPKRNNIFRD) are Cytoplasmic-facing. A helical transmembrane segment spans residues 397-417 (ALIVIIGDTTMSLVGGGAVFA). The Extracellular segment spans residues 418 to 451 (TLGYLAKATGQDVKDVVKSGLSLAFVVYPEAMTR). Residues 452–472 (MPVPWLWCFIFFLMLFLLGAS) traverse the membrane as a helical segment. Na(+) is bound at residue Leu-469. The Cytoplasmic segment spans residues 473-495 (TEIALVDVFCSCIYDQYPRFRNR). A helical transmembrane segment spans residues 496–516 (KWIVVIAWCSVLYCIGLVFST). Topologically, residues 517-531 (RAGYYWFEMFDEYAA) are extracellular. Residues 532–552 (GFSSVCTVVCELLVMMYIYGF) traverse the membrane as a helical segment. The Cytoplasmic portion of the chain corresponds to 553 to 578 (RNVRDDITEVVGHARNKFTGAIGAHS). The chain crosses the membrane as a helical span at residues 579–599 (WYFTANWMVISPSIALILVGL). Residues 600–616 (SFVREYPYMGRHDIYPA) lie on the Extracellular side of the membrane. A helical membrane pass occupies residues 617-637 (VFDIFGWFLSFLPVIIVPIFM). Over 638–728 (LLNFIRCRNR…DTSSTYHQVY (91 aa)) the chain is Cytoplasmic. A compositionally biased stretch (acidic residues) spans 687–699 (PWDEENVDLTDSE). The tract at residues 687–728 (PWDEENVDLTDSESESRNAASGDVPIDDVATIDTSSTYHQVY) is disordered. Residues 718-728 (IDTSSTYHQVY) show a composition bias toward polar residues.

This sequence belongs to the sodium:neurotransmitter symporter (SNF) (TC 2.A.22) family. As to expression, expressed in the INT-9 cells and posterior cells of the alimentary canal of the intestine, gut epithelial cells, the pharynx of some worms, two cells of the rectal gland, and in DVA, DVB and DVC neurons and amphid sensory neurons ASI, ADF and ASK neurons.

It localises to the cell membrane. Functionally, sodium-dependent amino acid transporter that mediates the uptake of the L-enantiomers of various amino acids, including L-proline and L-methionine, and also of acidic amino acids such as L-glutamic acid and L-aspartic acid. May additionally have a role in potassium-dependent amino acid absorption. In response to the availability of amino acid nutrients, may play a role in dauer formation. May play a role in promoting fertility. The polypeptide is Sodium-dependent transporter snf-5 (Caenorhabditis elegans).